Consider the following 484-residue polypeptide: PTS system MurNAc-GlcNAc-specific EIIBC component (484 aa).

The region spanning 5-87 (QQLAERIIAA…AELSGVKLGD (83 aa)) is the PTS EIIB type-1 domain. Residue Cys-27 is the Phosphocysteine intermediate; for EIIB activity of the active site. In terms of domain architecture, PTS EIIC type-1 spans 130 to 484 (KSIANIFIPL…AMRQTDLLGD (355 aa)). Transmembrane regions (helical) follow at residues 135–155 (IFIPLIPAFIGAGLIGGIAAV), 160–180 (MVAGYISGAWITQLITVFNVI), 200–220 (FGATPGLGGVIGGTTLLTGIA), 234–254 (LQPGQGGIIGVIFAVWILSIV), 274–294 (IALLIVGLLTIFIFMPLAGFV), 305–325 (IISIGGVFSGFIIGASFLPLV), 349–369 (LLPIAAMAGAGQVGAALALWV), 384–404 (ALPVGFLGIGEPLIYGVTLPL), 408–428 (FLTACIGGGIGGAVIGGIGHI), and 450–470 (LGYIAGLLTAYAGGFVCTYLF).

Its subcellular location is the cell membrane. It carries out the reaction N-acetyl-beta-D-muramate-(1-&gt;4)-N-acetyl-D-glucosamine(out) + N(pros)-phospho-L-histidyl-[protein] = 6-phospho-N-acetyl-beta-D-muramate-(1-&gt;4)-N-acetyl-D-glucosamine(in) + L-histidyl-[protein]. Its pathway is cell wall biogenesis; peptidoglycan recycling. Functionally, the phosphoenolpyruvate-dependent sugar phosphotransferase system (sugar PTS), a major carbohydrate active transport system, catalyzes the phosphorylation of incoming sugar substrates concomitantly with their translocation across the cell membrane. This system is involved in the uptake and phosphorylation of MurNAc-GlcNAc, the principle peptidoglycan turnover product of S.aureus, yielding cytoplasmic MurNAc 6P-GlcNAc. This Staphylococcus aureus (strain bovine RF122 / ET3-1) protein is PTS system MurNAc-GlcNAc-specific EIIBC component.